A 422-amino-acid polypeptide reads, in one-letter code: Dipeptidase aclJ (422 aa).

The chain crosses the membrane as a helical span at residues Leu-28–Leu-45. 2 residues coordinate Zn(2+): His-77 and Asp-79. Residue Asn-96 is glycosylated (N-linked (GlcNAc...) asparagine). A disulfide bridge connects residues Cys-128 and Cys-219. Zn(2+) is bound at residue Glu-190. Residue His-217 coordinates substrate. Asn-270 carries N-linked (GlcNAc...) asparagine glycosylation. An intrachain disulfide couples Cys-287 to Cys-319. Residues Arg-291 and Asp-351 each contribute to the substrate site.

The protein belongs to the metallo-dependent hydrolases superfamily. Peptidase M19 family. It depends on Zn(2+) as a cofactor.

The protein localises to the membrane. The enzyme catalyses an L-aminoacyl-L-amino acid + H2O = 2 an L-alpha-amino acid. It participates in mycotoxin biosynthesis. Its function is as follows. Dipeptidase; part of the gene cluster that mediates the biosynthesis of aspirochlorine (or antibiotic A30641), an unusual halogenated spiro compound with distinctive antifungal properties due to selective inhibition of protein biosynthesis, and which is also active against bacteria, viruses, and murine tumor cells. The non-ribosomal peptide synthetase (NRPS) aclP is responsible the formation of the diketopiperazine (DKP) core from the condensation of 2 phenylalanine residues. One Phe residue is tailored into chlorotyrosine by hydroxylation and chlorination, whereas the second Phe undergoes an unprecedented C-C bond cleavage to be converted into glycine. After formation of the DKP, sulfur is incorporated into the DKP by conjugation with glutathione by aclG, followed by its stepwise degradation to the thiol by aclI, aclJ and aclK, and the dithiol oxidation by aclT. In addition, oxygenases (aclB, aclC, aclL and aclO) and O-methyltransferases (aclM and aclU) act as tailoring enzymes to produce the intermediate dechloroaspirochlorine. Ultimately, chlorination of dechloroaspirochlorine by the halogenase aclH is the last step in the aspirochlorine pathway. In Aspergillus oryzae (strain ATCC 42149 / RIB 40) (Yellow koji mold), this protein is Dipeptidase aclJ.